The following is a 203-amino-acid chain: Vexin (203 aa).

Basic and acidic residues predominate over residues 59-70; sequence HRTDRRDGEGRW. The segment at 59–101 is disordered; it reads HRTDRRDGEGRWSGRFQNPRLQGPHPAKTPARPVGTSEPKSAN.

It belongs to the vexin family.

The protein resides in the cell membrane. Its subcellular location is the nucleus. In terms of biological role, required for neurogenesis in the neural plate and retina. Strongly cooperates with neural bHLH factors to promote neurogenesis. This chain is Vexin, found in Bos taurus (Bovine).